Here is a 134-residue protein sequence, read N- to C-terminus: Phosphoribosyl-AMP cyclohydrolase (134 aa).

D80 provides a ligand contact to Mg(2+). C81 is a Zn(2+) binding site. 2 residues coordinate Mg(2+): D82 and D84. 2 residues coordinate Zn(2+): C98 and C105.

It belongs to the PRA-CH family. In terms of assembly, homodimer. Mg(2+) serves as cofactor. Requires Zn(2+) as cofactor.

Its subcellular location is the cytoplasm. The catalysed reaction is 1-(5-phospho-beta-D-ribosyl)-5'-AMP + H2O = 1-(5-phospho-beta-D-ribosyl)-5-[(5-phospho-beta-D-ribosylamino)methylideneamino]imidazole-4-carboxamide. Its pathway is amino-acid biosynthesis; L-histidine biosynthesis; L-histidine from 5-phospho-alpha-D-ribose 1-diphosphate: step 3/9. Catalyzes the hydrolysis of the adenine ring of phosphoribosyl-AMP. This is Phosphoribosyl-AMP cyclohydrolase from Bordetella petrii (strain ATCC BAA-461 / DSM 12804 / CCUG 43448).